The chain runs to 317 residues: Melanocyte-stimulating hormone receptor (317 aa).

Topologically, residues 1–37 (MPVQGSQRRLLGSLNSTPTATPHLGLAANQTGARCRE) are extracellular. Residue asparagine 29 is glycosylated (N-linked (GlcNAc...) asparagine). The helical transmembrane segment at 38–63 (VSIPDGLFLSLGLVSLVENVLVVTAI) threads the bilayer. Residues 64–72 (AKNRNLHSP) lie on the Cytoplasmic side of the membrane. The chain crosses the membrane as a helical span at residues 73-93 (MYCFICCLALSDLLVSGSNML). Residues 94–118 (ETAVTLLLEAGALVARAAVVQQLDN) lie on the Extracellular side of the membrane. Residues 119–140 (VIDVITCSSMLSSLCFLGAIAV) traverse the membrane as a helical segment. Topologically, residues 141–163 (DRYISIFYALRYHSIVTLPRAQR) are cytoplasmic. Residues 164–183 (AIAAIWVASVLCSTLFIAYY) traverse the membrane as a helical segment. Topologically, residues 184–191 (DHAAVLLC) are extracellular. Residues 192–211 (LVVFFLAMLVLMAVLYVHML) form a helical membrane-spanning segment. At 212 to 240 (ARACQHAQGIARLHKRQRLAHQGFGLKGA) the chain is on the cytoplasmic side. A helical membrane pass occupies residues 241–266 (ATLTILLGIFFLCWGPFFLHLTLIVL). Topologically, residues 267–279 (CPQHPTCSCIFKN) are extracellular. Residues 280 to 300 (FNLFLALIICNAIIDPLIYAF) traverse the membrane as a helical segment. Residues 301–317 (RSQELRRTLKEVLLCSW) are Cytoplasmic-facing. Cysteine 315 carries S-palmitoyl cysteine lipidation.

This sequence belongs to the G-protein coupled receptor 1 family. Interacts with MGRN1, but does not undergo MGRN1-mediated ubiquitination; this interaction competes with GNAS-binding and thus inhibits agonist-induced cAMP production. Interacts with OPN3; the interaction results in a decrease in MC1R-mediated cAMP signaling and ultimately a decrease in melanin production in melanocytes. Expressed in the adrenal gland.

Its subcellular location is the cell membrane. Receptor for MSH (alpha, beta and gamma) and ACTH. The activity of this receptor is mediated by G proteins which activate adenylate cyclase. Mediates melanogenesis, the production of eumelanin (black/brown) and phaeomelanin (red/yellow), via regulation of cAMP signaling in melanocytes. This is Melanocyte-stimulating hormone receptor (MC1R) from Macaca mulatta (Rhesus macaque).